We begin with the raw amino-acid sequence, 412 residues long: Nucleoside transporter 1 (412 aa).

The segment at 1 to 21 (MSKIKESSSGILGASNNTNKE) is disordered. The Cytoplasmic portion of the chain corresponds to 1 to 29 (MSKIKESSSGILGASNNTNKESSQKSARS). Residues 7–21 (SSSGILGASNNTNKE) are compositionally biased toward polar residues. The chain crosses the membrane as a helical span at residues 30–50 (IALPMTYALIGVSCLNVWNSA). Residues 51 to 56 (LGLNIK) lie on the Extracellular side of the membrane. A helical transmembrane segment spans residues 57-77 (ITYNIFQMAGLLTSSVLALFV). The Cytoplasmic segment spans residues 78–81 (NYPR). Residues 82 to 102 (VLLPTSLGVLTLLCAGFQIAH) traverse the membrane as a helical segment. Over 103 to 114 (QTFSDSAFDTYC) the chain is Extracellular. The chain crosses the membrane as a helical span at residues 115 to 135 (LAAFITIGLMAGIAQTIAFAI). At 136–144 (GTTKESNMS) the chain is on the cytoplasmic side. A helical membrane pass occupies residues 145–165 (GYISAGIGMSGVLIFCINLIL). Residues 166–181 (DYIVSDEKIYEINKSK) are Extracellular-facing. Residues 182–202 (LLCLFSISEIFLIITIVCCVL) traverse the membrane as a helical segment. The Cytoplasmic portion of the chain corresponds to 203-240 (YIDLFPKNDNNKDSTDIEKAEEKEGRLPLIEIIKDGYK). The helical transmembrane segment at 241 to 261 (AILSIFLVNWLSLQLFPGIGH) threads the bilayer. Residues 262–271 (KKWQEKHGMT) lie on the Extracellular side of the membrane. The chain crosses the membrane as a helical span at residues 272–294 (DNNVTIIVGMFQVFDFISRYPPN). Residues 295–310 (FTHIKIFKYFTFSLNT) are Cytoplasmic-facing. The helical transmembrane segment at 311–331 (LLIGNFLRLLFIPWFVLNAVI) threads the bilayer. At 332 to 343 (SSSFFTNIVQQC) the chain is on the extracellular side. Residues 344–364 (VCIAALAFTNGWFNTVPFIVF) traverse the membrane as a helical segment. Over 365 to 382 (VKELKKVKHQKDIETISR) the chain is Cytoplasmic. A helical transmembrane segment spans residues 383-403 (IMVVSLFFGLFFGMLTTCLYD). The Extracellular portion of the chain corresponds to 404 to 412 (YFPIGILNN).

The protein belongs to the SLC29A/ENT transporter (TC 2.A.57) family.

The protein localises to the cell membrane. The enzyme catalyses inosine(in) = inosine(out). The catalysed reaction is adenosine(in) = adenosine(out). It carries out the reaction hypoxanthine(out) = hypoxanthine(in). It catalyses the reaction guanosine(in) = guanosine(out). The enzyme catalyses guanine(out) = guanine(in). The catalysed reaction is thymidine(in) = thymidine(out). It carries out the reaction uridine(out) = uridine(in). It catalyses the reaction uracil(in) = uracil(out). The enzyme catalyses thymine(out) = thymine(in). The catalysed reaction is adenine(out) = adenine(in). It carries out the reaction cytosine(out) = cytosine(in). It catalyses the reaction xanthine(out) = xanthine(in). Functionally, nucleoside and nucleobase transporter with a broad substrate specificity. The protein is Nucleoside transporter 1 of Plasmodium berghei (strain Anka).